A 138-amino-acid polypeptide reads, in one-letter code: Large ribosomal subunit protein uL16 (138 aa).

Over residues 1–21 the composition is skewed to basic residues; that stretch reads MLIPRKVKHRKQHHPSLRGRA. Residues 1–22 form a disordered region; that stretch reads MLIPRKVKHRKQHHPSLRGRAK.

This sequence belongs to the universal ribosomal protein uL16 family. As to quaternary structure, part of the 50S ribosomal subunit.

Its function is as follows. Binds 23S rRNA and is also seen to make contacts with the A and possibly P site tRNAs. This chain is Large ribosomal subunit protein uL16, found in Thermobifida fusca (strain YX).